The following is a 349-amino-acid chain: Galanin receptor type 1 (349 aa).

Residues 1 to 36 (MELAVGNLSEGNASWPEPPAPEPGPLFGIGVENFVT) are Extracellular-facing. N-linked (GlcNAc...) asparagine glycosylation is found at Asn7 and Asn12. A helical membrane pass occupies residues 37–57 (LVVFGLIFALGVLGNSLVITV). Topologically, residues 58-70 (LARSKPGKPRSTT) are cytoplasmic. The chain crosses the membrane as a helical span at residues 71 to 91 (NLFILNLSIADLAYLLFCIPF). Topologically, residues 92–109 (QATVYALPTWVLGAFICK) are extracellular. Cysteines 108 and 187 form a disulfide. Residues 110–131 (FIHYFFTVSMLVSIFTLAAMSV) traverse the membrane as a helical segment. The Cytoplasmic portion of the chain corresponds to 132-151 (DRYVAIVHSRRSSSLRVSRN). The chain crosses the membrane as a helical span at residues 152–172 (ALLGVGCIWALSIAMASPVAY). Residues 173–200 (HQGLFHPRASNQTFCWEQWPDPRHKKAY) lie on the Extracellular side of the membrane. Asn183 carries an N-linked (GlcNAc...) asparagine glycan. The helical transmembrane segment at 201–221 (VVCTFVFGYLLPLLLICFCYA) threads the bilayer. The Cytoplasmic segment spans residues 222 to 248 (KVLNHLHKKLKNMSKKSEASKKKTAQT). A helical membrane pass occupies residues 249-269 (VLVVVVVFGISWLPHHIIHLW). Topologically, residues 270–271 (AE) are extracellular. A helical membrane pass occupies residues 272 to 292 (FGVFPLTPASFLFRITAHCLA). The Cytoplasmic segment spans residues 293-349 (YSNSSVNPIIYAFLSENFRKAYKQVFKCHIRKDSHLSDTKESKSRIDTPPSTNCTHV). The S-palmitoyl cysteine moiety is linked to residue Cys320.

Belongs to the G-protein coupled receptor 1 family. Interacts with GRP39 AND HTR1A. Palmitoylated on at least one of the three cysteine residues present in the C-terminal part.

Its subcellular location is the cell membrane. Functionally, receptor for the hormone galanin. The activity of this receptor is mediated by G proteins that inhibit adenylate cyclase activity. This Homo sapiens (Human) protein is Galanin receptor type 1 (GALR1).